A 382-amino-acid polypeptide reads, in one-letter code: ATP phosphoribosyltransferase regulatory subunit (382 aa).

Belongs to the class-II aminoacyl-tRNA synthetase family. HisZ subfamily. As to quaternary structure, heteromultimer composed of HisG and HisZ subunits.

The protein resides in the cytoplasm. It functions in the pathway amino-acid biosynthesis; L-histidine biosynthesis; L-histidine from 5-phospho-alpha-D-ribose 1-diphosphate: step 1/9. Required for the first step of histidine biosynthesis. May allow the feedback regulation of ATP phosphoribosyltransferase activity by histidine. The polypeptide is ATP phosphoribosyltransferase regulatory subunit (Burkholderia pseudomallei (strain K96243)).